Reading from the N-terminus, the 329-residue chain is Thioredoxin-like fold domain-containing protein MRL7L homolog, chloroplastic (329 aa).

The transit peptide at 1–46 directs the protein to the chloroplast; that stretch reads MALQSCCSSSASVPATCSALCLAEATRAASLFVRPRAAARRLVLAR. Residues 58–91 form a disordered region; the sequence is AVQLVLGGRARDDGSESESSDDEDDDEPMQMTDE. A compositionally biased stretch (acidic residues) spans 72-85; that stretch reads SESESSDDEDDDEP.

The protein resides in the plastid. It is found in the chloroplast stroma. Its function is as follows. Plays an essential role in early steps of chloroplast development. Involved in the regulation of plastid gene expression. Required for the proper function of the plastid transcriptional machinery and protein accumulation in thylakoid membranes. May function as molecular chaperone to ensure proper organization of the nucleoids in chloroplasts. This is Thioredoxin-like fold domain-containing protein MRL7L homolog, chloroplastic from Oryza sativa subsp. japonica (Rice).